The chain runs to 132 residues: UPF0292 protein PH1700 (132 aa).

The Toprim domain occupies 20–100 (EGAIIVEGAR…KVDTETRREL (81 aa)). Residues Glu-26, Asp-69, and Asp-71 each contribute to the Mg(2+) site.

This sequence belongs to the UPF0292 family. Requires Mg(2+) as cofactor.

The sequence is that of UPF0292 protein PH1700 from Pyrococcus horikoshii (strain ATCC 700860 / DSM 12428 / JCM 9974 / NBRC 100139 / OT-3).